Reading from the N-terminus, the 128-residue chain is AESSAMKFQRQHMDPEGSPSNSSNYCNVMMIRRNMTQGRCKPVNTFVHESLADVQAVCFQKNVLCKNGQTNCYQSYSRMRITDCRVTSSSKFPNCSYRMSQAQKSIIVACEGDPYVPVHFDASVEPST.

Residues 1–21 form a disordered region; the sequence is AESSAMKFQRQHMDPEGSPSN. The substrate site is built by lysine 7 and arginine 10. Residue histidine 12 is the Proton acceptor of the active site. N-linked (GlcNAc...) asparagine glycans are attached at residues asparagine 21 and asparagine 34. Cystine bridges form between cysteine 26–cysteine 84, cysteine 40–cysteine 95, cysteine 58–cysteine 110, and cysteine 65–cysteine 72. Residues 41–45, lysine 66, and arginine 85 contribute to the substrate site; that span reads KPVNT. The active-site Proton donor is histidine 119.

This sequence belongs to the pancreatic ribonuclease family. As to expression, pancreas.

Its subcellular location is the secreted. The enzyme catalyses an [RNA] containing cytidine + H2O = an [RNA]-3'-cytidine-3'-phosphate + a 5'-hydroxy-ribonucleotide-3'-[RNA].. It carries out the reaction an [RNA] containing uridine + H2O = an [RNA]-3'-uridine-3'-phosphate + a 5'-hydroxy-ribonucleotide-3'-[RNA].. This chain is Ribonuclease pancreatic B, found in Cavia porcellus (Guinea pig).